The primary structure comprises 241 residues: Ribonuclease PH (241 aa).

Phosphate contacts are provided by residues Arg-89 and 127-129 (GTR).

The protein belongs to the RNase PH family. In terms of assembly, homohexameric ring arranged as a trimer of dimers.

The enzyme catalyses tRNA(n+1) + phosphate = tRNA(n) + a ribonucleoside 5'-diphosphate. Functionally, phosphorolytic 3'-5' exoribonuclease that plays an important role in tRNA 3'-end maturation. Removes nucleotide residues following the 3'-CCA terminus of tRNAs; can also add nucleotides to the ends of RNA molecules by using nucleoside diphosphates as substrates, but this may not be physiologically important. Probably plays a role in initiation of 16S rRNA degradation (leading to ribosome degradation) during starvation. This chain is Ribonuclease PH, found in Xanthomonas euvesicatoria pv. vesicatoria (strain 85-10) (Xanthomonas campestris pv. vesicatoria).